The sequence spans 333 residues: MKSAKQIATALLVGMFTFSAVGCSMVEKRPEAINSKVVATIYGNQTITRGEIDKLAKGTVEQLKSQYGDSYEKNEEAVAALKKQKEQILTSLIDQKIFLKKAKDQKITLTKDEIKTNVDDVYAQYQQEFKTESEFKSQLSQYGYTVAEFKDQLKNRAISNKLIQQVVKDVKVSDDEAKKYYDSHKNSYTQSPNTVHLAHILVKTEKEAKAVKARIDKGEDFATVAKQVSTDGSKEKGGDLGDIQENDSNYDKTFMAAALKLNDNQVSAPVHTQFGWHVIKCIKKTEYPVKDFNSVKDDIKQTVLSTKQKSVYQKTLKKWESQANIDKNEKNLM.

The first 22 residues, 1–22 (MKSAKQIATALLVGMFTFSAVG), serve as a signal peptide directing secretion. The N-palmitoyl cysteine moiety is linked to residue C23. C23 carries S-diacylglycerol cysteine lipidation. Residues 192-283 (PNTVHLAHIL…FGWHVIKCIK (92 aa)) form the PpiC domain.

The protein belongs to the PrsA family.

It localises to the cell membrane. It carries out the reaction [protein]-peptidylproline (omega=180) = [protein]-peptidylproline (omega=0). In terms of biological role, plays a major role in protein secretion by helping the post-translocational extracellular folding of several secreted proteins. This is Foldase protein PrsA from Clostridium acetobutylicum (strain ATCC 824 / DSM 792 / JCM 1419 / IAM 19013 / LMG 5710 / NBRC 13948 / NRRL B-527 / VKM B-1787 / 2291 / W).